We begin with the raw amino-acid sequence, 186 residues long: Elongation factor P (186 aa).

Belongs to the elongation factor P family.

The protein localises to the cytoplasm. It functions in the pathway protein biosynthesis; polypeptide chain elongation. Its function is as follows. Involved in peptide bond synthesis. Stimulates efficient translation and peptide-bond synthesis on native or reconstituted 70S ribosomes in vitro. Probably functions indirectly by altering the affinity of the ribosome for aminoacyl-tRNA, thus increasing their reactivity as acceptors for peptidyl transferase. In Maridesulfovibrio salexigens (strain ATCC 14822 / DSM 2638 / NCIMB 8403 / VKM B-1763) (Desulfovibrio salexigens), this protein is Elongation factor P.